Here is a 358-residue protein sequence, read N- to C-terminus: GTPase Obg (358 aa).

Residues 1 to 159 (MKFVDEVTIR…RNLHLELRLL (159 aa)) form the Obg domain. Positions 160 to 334 (ADVGLLGMPN…LAQDVMNRLE (175 aa)) constitute an OBG-type G domain. GTP-binding positions include 166–173 (GMPNAGKS), 191–195 (FTTLY), 213–216 (DIPG), 284–287 (NKLD), and 315–317 (SAL). The Mg(2+) site is built by serine 173 and threonine 193. A disordered region spans residues 337–358 (DEEAREAGERARREQRQEEGPE). A compositionally biased stretch (basic and acidic residues) spans 341-358 (REAGERARREQRQEEGPE).

It belongs to the TRAFAC class OBG-HflX-like GTPase superfamily. OBG GTPase family. As to quaternary structure, monomer. Requires Mg(2+) as cofactor.

It localises to the cytoplasm. Functionally, an essential GTPase which binds GTP, GDP and possibly (p)ppGpp with moderate affinity, with high nucleotide exchange rates and a fairly low GTP hydrolysis rate. Plays a role in control of the cell cycle, stress response, ribosome biogenesis and in those bacteria that undergo differentiation, in morphogenesis control. The protein is GTPase Obg of Alkalilimnicola ehrlichii (strain ATCC BAA-1101 / DSM 17681 / MLHE-1).